Reading from the N-terminus, the 430-residue chain is Alpha-humulene synthase asR6 (430 aa).

The protein belongs to the terpene synthase family. Alpha-humulene synthase eupE subfamily. The cofactor is Mg(2+).

The enzyme catalyses (2E,6E)-farnesyl diphosphate = alpha-humulene + diphosphate. Its pathway is secondary metabolite biosynthesis; terpenoid biosynthesis. Alpha-humulene synthase; part of the gene cluster that mediates the biosynthesis of xenovulene A, an unusual meroterpenoid that has potent inhibitory effects on the human gamma-aminobutyrate A (GABAA) benzodiazepine receptor. The first step of xenovulene A biosynthesis is the biosynthesis of 3-methylorcinaldehyde performed by the non-reducing polyketide synthase aspks1. The salicylate hydroxylase asL1 then catalyzes the oxidative dearomatization of 3-methylorcinaldehyde to yield a dearomatized hydroxycyclohexadione. The 2-oxoglutarate-dependent dioxygenase asL3 further catalyzes the oxidative ring expansion to provide the first tropolone metabolite. The cytochrome P450 monooxygenase asR2 allows the synthesis of tropolone hemiacetal. In parallel, a previously unrecognised class of terpene cyclase, asR6, produces alpha-humulene from farnesylpyrophosphate (FPP). The putative Diels-Alderase asR5 probably catalyzes the formation of the tropolone-humulene skeleton by linking humulene and the polyketide moiety. Oxidative-ring contractions catalyzed by asL4 and asL6 then processively remove carbon atoms from the polyketide to yield xenovulene A. The chain is Alpha-humulene synthase asR6 from Sarocladium schorii (Acremonium strictum (strain IMI 501407)).